We begin with the raw amino-acid sequence, 212 residues long: MKSKFVVIEGLEGAGKTTARDTVVDVLREHGINDIAFTREPGGTPLAEKLRDLFKRGVEGELPTIKAEVLMLYAARVQLVETVIKPALARGAWVVGDRHDLSSQAYQGGGRGVDQQLMASLRDTVLGEFRPDLTLYLDLPPIVGLQRARARGELDRIEQEALPFFERTRARYRELAAQDASIITVDASQSLDQVTAAIRRCVSQWLQQQEGA.

ATP is bound at residue 10-17 (GLEGAGKT).

This sequence belongs to the thymidylate kinase family.

It carries out the reaction dTMP + ATP = dTDP + ADP. In terms of biological role, phosphorylation of dTMP to form dTDP in both de novo and salvage pathways of dTTP synthesis. The sequence is that of Thymidylate kinase from Serratia proteamaculans (strain 568).